The chain runs to 116 residues: SGSCSLKTCWLQLADFRKVGDHLKEKYDSAAAMRINRKGKLELVNSRFNTPTVEDLVYTDQSPDYCLRNESTGSMGTLGRLCNKTSEGMDGCELMCCGRGYDQFKTVQVERCHCKF.

A lipid anchor (O-palmitoleoyl serine; by PORCN) is attached at Ser1. N-linked (GlcNAc...) asparagine glycans are attached at residues Asn69 and Asn83. An intrachain disulfide couples Cys82 to Cys97.

The protein belongs to the Wnt family. In terms of processing, palmitoleoylation is required for efficient binding to frizzled receptors. Depalmitoleoylation leads to Wnt signaling pathway inhibition.

The protein resides in the secreted. Its subcellular location is the extracellular space. It localises to the extracellular matrix. Ligand for members of the frizzled family of seven transmembrane receptors. Probable developmental protein. May be a signaling molecule which affects the development of discrete regions of tissues. Is likely to signal over only few cell diameters. This is Protein Wnt-5b (WNT-5B) from Plethodon jordani (Red-cheeked salamander).